Here is a 330-residue protein sequence, read N- to C-terminus: Serpentine receptor class J-38 (330 aa).

Transmembrane regions (helical) follow at residues 6–26, 43–63, 98–118, 135–155, 200–220, 253–273, and 285–305; these read IYIF…PIFV, LLLF…VVPI, LVAS…LVIY, LLLS…LGYA, TIIW…LALL, IPIV…IFGI, and GALG…LPIF.

This sequence belongs to the nematode receptor-like protein srj family.

The protein resides in the membrane. This Caenorhabditis elegans protein is Serpentine receptor class J-38 (srj-38).